The sequence spans 318 residues: Taste receptor type 2 member 60 (318 aa).

Topologically, residues 1-7 (MNGDHMV) are extracellular. The helical transmembrane segment at 8 to 28 (LGSSMTDEKAIILVIILLLLC) threads the bilayer. At 29-40 (LVAIAGNCFITA) the chain is on the cytoplasmic side. The helical transmembrane segment at 41–61 (ALGMEWVLQRMLLPCDKLLVS) threads the bilayer. Topologically, residues 62–88 (LGASRFCPQWVVMGKTTYVFLYPTAFP) are extracellular. The chain crosses the membrane as a helical span at residues 89–109 (YNPVLRFLAFQWDLLNAATLW). Over 110–128 (FSTWLSVFYCVKIATFTHP) the chain is Cytoplasmic. Residues 129–149 (VFLWLKHKLSEWVPWMLFSSV) form a helical membrane-spanning segment. At 150–183 (GLSSFTTILFFIGNHRVYQSYLRNHLQPWNVTGN) the chain is on the extracellular side. N-linked (GlcNAc...) asparagine glycosylation occurs at asparagine 179. The chain crosses the membrane as a helical span at residues 184 to 204 (SIWSYCEKFYLFPLKMITWTM). The Cytoplasmic segment spans residues 205 to 234 (PTAVFFICMILLITSLGRHMKKALLTNSGF). Residues 235–255 (RDPSVQAHIKAMLALLSFAML) form a helical membrane-spanning segment. Over 256–264 (FISYFLSLV) the chain is Extracellular. Residues 265–285 (FSAAGIFPPLDFKFWVWESVI) traverse the membrane as a helical segment. The Cytoplasmic segment spans residues 286–318 (YLCAAVHPIILLFSNRRLRAVLKRCRSSRCGTP).

This sequence belongs to the G-protein coupled receptor T2R family.

Its subcellular location is the membrane. Its function is as follows. Receptor that may play a role in the perception of bitterness and is gustducin-linked. May play a role in sensing the chemical composition of the gastrointestinal content. The activity of this receptor may stimulate alpha gustducin, mediate PLC-beta-2 activation and lead to the gating of TRPM5. This Pongo pygmaeus (Bornean orangutan) protein is Taste receptor type 2 member 60 (TAS2R60).